A 222-amino-acid chain; its full sequence is Probable GTP-binding protein EngB (222 aa).

The EngB-type G domain occupies 27–202 (TGIEVAFAGR…AKKLDEWFLG (176 aa)). GTP is bound by residues 35–42 (GRSNAGKS), 61–65 (GRTQL), 81–84 (DLPG), 148–151 (TKAD), and 181–183 (FSS). 2 residues coordinate Mg(2+): S42 and T63.

The protein belongs to the TRAFAC class TrmE-Era-EngA-EngB-Septin-like GTPase superfamily. EngB GTPase family. It depends on Mg(2+) as a cofactor.

Its function is as follows. Necessary for normal cell division and for the maintenance of normal septation. In Pseudoalteromonas translucida (strain TAC 125), this protein is Probable GTP-binding protein EngB.